A 449-amino-acid polypeptide reads, in one-letter code: Trigger factor (449 aa).

The 86-residue stretch at 172 to 257 (GDEVRFDFKG…IKEITNVKPQ (86 aa)) folds into the PPIase FKBP-type domain.

The protein belongs to the FKBP-type PPIase family. Tig subfamily.

Its subcellular location is the cytoplasm. The enzyme catalyses [protein]-peptidylproline (omega=180) = [protein]-peptidylproline (omega=0). Its function is as follows. Involved in protein export. Acts as a chaperone by maintaining the newly synthesized protein in an open conformation. Functions as a peptidyl-prolyl cis-trans isomerase. The protein is Trigger factor of Ureaplasma parvum serovar 3 (strain ATCC 27815 / 27 / NCTC 11736).